Here is a 263-residue protein sequence, read N- to C-terminus: 4-hydroxy-tetrahydrodipicolinate reductase (263 aa).

NAD(+) contacts are provided by residues Gly-8–Met-13, Asp-34, Gly-99–Thr-101, and Ser-125–Tyr-128. His-157 (proton donor/acceptor) is an active-site residue. Residue His-158 participates in (S)-2,3,4,5-tetrahydrodipicolinate binding. The active-site Proton donor is the Lys-161. Gly-167–Thr-168 contributes to the (S)-2,3,4,5-tetrahydrodipicolinate binding site.

This sequence belongs to the DapB family.

It is found in the cytoplasm. The enzyme catalyses (S)-2,3,4,5-tetrahydrodipicolinate + NAD(+) + H2O = (2S,4S)-4-hydroxy-2,3,4,5-tetrahydrodipicolinate + NADH + H(+). It carries out the reaction (S)-2,3,4,5-tetrahydrodipicolinate + NADP(+) + H2O = (2S,4S)-4-hydroxy-2,3,4,5-tetrahydrodipicolinate + NADPH + H(+). It participates in amino-acid biosynthesis; L-lysine biosynthesis via DAP pathway; (S)-tetrahydrodipicolinate from L-aspartate: step 4/4. In terms of biological role, catalyzes the conversion of 4-hydroxy-tetrahydrodipicolinate (HTPA) to tetrahydrodipicolinate. In Methanococcoides burtonii (strain DSM 6242 / NBRC 107633 / OCM 468 / ACE-M), this protein is 4-hydroxy-tetrahydrodipicolinate reductase.